The chain runs to 140 residues: Sex-regulated protein janus-B (140 aa).

Residue Arg42 coordinates substrate. Catalysis depends on His69, which acts as the Proton acceptor. 110-112 (SRT) is a substrate binding site.

It belongs to the janus family.

Functionally, janA and janB regulate somatic sex differentiation. The sequence is that of Sex-regulated protein janus-B (janB) from Drosophila yakuba (Fruit fly).